The primary structure comprises 524 residues: Peptide chain release factor 3 (524 aa).

One can recognise a tr-type G domain in the interval 9–275 (SRRRTFAIIS…AVVDLSPPPI (267 aa)). Residues 18–25 (SHPDAGKT), 86–90 (DTPGH), and 140–143 (NKLD) each bind GTP.

It belongs to the TRAFAC class translation factor GTPase superfamily. Classic translation factor GTPase family. PrfC subfamily.

Its subcellular location is the cytoplasm. Increases the formation of ribosomal termination complexes and stimulates activities of RF-1 and RF-2. It binds guanine nucleotides and has strong preference for UGA stop codons. It may interact directly with the ribosome. The stimulation of RF-1 and RF-2 is significantly reduced by GTP and GDP, but not by GMP. This Dechloromonas aromatica (strain RCB) protein is Peptide chain release factor 3.